A 328-amino-acid polypeptide reads, in one-letter code: H-2 class I histocompatibility antigen, K-Q alpha chain (328 aa).

Residues 1–71 (PRFISVGYVD…LLRYYNQSAG (71 aa)) form an alpha-1 region. Over 1–265 (PRFISVGYVD…EPPPSAVSNT (265 aa)) the chain is Extracellular. Residue N67 is glycosylated (N-linked (GlcNAc...) asparagine). An alpha-2 region spans residues 72 to 163 (GSHTIQRMYG…KNGNATLLRT (92 aa)). Residues C82 and C145 are joined by a disulfide bond. N157 carries N-linked (GlcNAc...) asparagine glycosylation. The segment at 164–255 (DSPKAHVTHH…GLPKPLTLRW (92 aa)) is alpha-3. An Ig-like C1-type domain is found at 166 to 252 (PKAHVTHHSR…YHQGLPKPLT (87 aa)). C184 and C240 form a disulfide bridge. The tract at residues 256–265 (EPPPSAVSNT) is connecting peptide. A helical membrane pass occupies residues 266 to 289 (VIIAVLVVLGAAIVTGAVVAFVMM). Topologically, residues 290–328 (RRRNTGGKGGDYALAPGSQTSDLSLPDCKVMVHDPHSLA) are cytoplasmic. S310 and S313 each carry phosphoserine.

The protein belongs to the MHC class I family. As to quaternary structure, heterodimer of an alpha chain and a beta chain (beta-2-microglobulin).

Its subcellular location is the membrane. Its function is as follows. Involved in the presentation of foreign antigens to the immune system. In Mus musculus (Mouse), this protein is H-2 class I histocompatibility antigen, K-Q alpha chain (H2-K1).